The primary structure comprises 284 residues: Bifunctional protein FolD (284 aa).

NADP(+) is bound by residues 166–168 and Ile-232; that span reads GAS.

It belongs to the tetrahydrofolate dehydrogenase/cyclohydrolase family. As to quaternary structure, homodimer.

The enzyme catalyses (6R)-5,10-methylene-5,6,7,8-tetrahydrofolate + NADP(+) = (6R)-5,10-methenyltetrahydrofolate + NADPH. It carries out the reaction (6R)-5,10-methenyltetrahydrofolate + H2O = (6R)-10-formyltetrahydrofolate + H(+). Its pathway is one-carbon metabolism; tetrahydrofolate interconversion. Its function is as follows. Catalyzes the oxidation of 5,10-methylenetetrahydrofolate to 5,10-methenyltetrahydrofolate and then the hydrolysis of 5,10-methenyltetrahydrofolate to 10-formyltetrahydrofolate. This Pseudomonas fluorescens (strain ATCC BAA-477 / NRRL B-23932 / Pf-5) protein is Bifunctional protein FolD.